The primary structure comprises 111 residues: Ribonuclease P protein component (111 aa).

The protein belongs to the RnpA family. Consists of a catalytic RNA component (M1 or rnpB) and a protein subunit.

It catalyses the reaction Endonucleolytic cleavage of RNA, removing 5'-extranucleotides from tRNA precursor.. Its function is as follows. RNaseP catalyzes the removal of the 5'-leader sequence from pre-tRNA to produce the mature 5'-terminus. It can also cleave other RNA substrates such as 4.5S RNA. The protein component plays an auxiliary but essential role in vivo by binding to the 5'-leader sequence and broadening the substrate specificity of the ribozyme. This is Ribonuclease P protein component from Borrelia garinii subsp. bavariensis (strain ATCC BAA-2496 / DSM 23469 / PBi) (Borreliella bavariensis).